We begin with the raw amino-acid sequence, 261 residues long: 5'-nucleotidase SurE (261 aa).

Asp-8, Asp-9, Ser-40, and Asn-94 together coordinate a divalent metal cation.

The protein belongs to the SurE nucleotidase family. The cofactor is a divalent metal cation.

The protein resides in the cytoplasm. It carries out the reaction a ribonucleoside 5'-phosphate + H2O = a ribonucleoside + phosphate. Functionally, nucleotidase that shows phosphatase activity on nucleoside 5'-monophosphates. The chain is 5'-nucleotidase SurE from Anaplasma marginale (strain Florida).